The following is a 246-amino-acid chain: 2-C-methyl-D-erythritol 4-phosphate cytidylyltransferase (246 aa).

This sequence belongs to the IspD/TarI cytidylyltransferase family. IspD subfamily.

The catalysed reaction is 2-C-methyl-D-erythritol 4-phosphate + CTP + H(+) = 4-CDP-2-C-methyl-D-erythritol + diphosphate. It participates in isoprenoid biosynthesis; isopentenyl diphosphate biosynthesis via DXP pathway; isopentenyl diphosphate from 1-deoxy-D-xylulose 5-phosphate: step 2/6. In terms of biological role, catalyzes the formation of 4-diphosphocytidyl-2-C-methyl-D-erythritol from CTP and 2-C-methyl-D-erythritol 4-phosphate (MEP). This is 2-C-methyl-D-erythritol 4-phosphate cytidylyltransferase from Clostridium tetani (strain Massachusetts / E88).